Here is a 177-residue protein sequence, read N- to C-terminus: Biotin-dependent acetyl-/propionyl-coenzyme A carboxylase epsilon subunit (177 aa).

The segment at 1-112 (MGTCPCESSE…TEKPLHPHEP (112 aa)) is disordered. The segment covering 18 to 100 (VSGTNEVSDG…SDGNETNNPA (83 aa)) has biased composition (polar residues).

As to quaternary structure, interacts with the AccA3/AccD5 biotin-dependent acyl-CoA carboxylase complex. Interacts with the AccA3/AccD6 complex. Is also part of the long-chain acyl-CoA carboxylase (LCC) complex, which is composed of AccA3, AccD4, AccD5 and AccE5. The four subunits are essential for activity, but AccD5, together with AccE5, probably plays a structural role rather than a catalytic one.

Its function is as follows. Stimulates activity of the AccA3/AccD5 biotin-dependent acyl-CoA carboxylase complex. Interacts with AccD5 and modulates its carboxylase activity for acetyl-CoA and propionyl-CoA. Inhibits activity of the AccA3/AccD6 complex. Is also required for the activity of the long-chain acyl-CoA carboxylase (LCC) complex. The sequence is that of Biotin-dependent acetyl-/propionyl-coenzyme A carboxylase epsilon subunit from Mycobacterium tuberculosis (strain ATCC 25618 / H37Rv).